The chain runs to 369 residues: Glutamate 5-kinase (369 aa).

Position 8 (Lys8) interacts with ATP. Residues Ser49, Asp136, and Asn148 each contribute to the substrate site. ATP-binding positions include 168 to 169 and 212 to 218; these read TD and TGGMMTK. The PUA domain occupies 277–355; it reads TGKLYLDSGA…KEISTILGYV (79 aa).

The protein belongs to the glutamate 5-kinase family.

It localises to the cytoplasm. It carries out the reaction L-glutamate + ATP = L-glutamyl 5-phosphate + ADP. Its pathway is amino-acid biosynthesis; L-proline biosynthesis; L-glutamate 5-semialdehyde from L-glutamate: step 1/2. In terms of biological role, catalyzes the transfer of a phosphate group to glutamate to form L-glutamate 5-phosphate. The chain is Glutamate 5-kinase from Trichormus variabilis (strain ATCC 29413 / PCC 7937) (Anabaena variabilis).